An 83-amino-acid polypeptide reads, in one-letter code: Translational regulator CsrA (83 aa).

It belongs to the CsrA/RsmA family. Homodimer; the beta-strands of each monomer intercalate to form a hydrophobic core, while the alpha-helices form wings that extend away from the core.

The protein localises to the cytoplasm. Functionally, a translational regulator that binds mRNA to regulate translation initiation and/or mRNA stability. Usually binds in the 5'-UTR at or near the Shine-Dalgarno sequence preventing ribosome-binding, thus repressing translation. Its main target seems to be the major flagellin gene, while its function is anatagonized by FliW. The sequence is that of Translational regulator CsrA from Thermotoga maritima (strain ATCC 43589 / DSM 3109 / JCM 10099 / NBRC 100826 / MSB8).